The chain runs to 429 residues: C4-dicarboxylate transport protein (429 aa).

Transmembrane regions (helical) follow at residues 3-23 (VSIF…GVLL), 44-64 (LIKM…IAGM), 76-96 (IALL…LVVV), 144-164 (AFAS…GFAL), 184-204 (VIFG…FGAM), 222-242 (LILC…GTIA), 331-351 (TLLV…GSGF), and 352-372 (IVLA…LALI).

The protein belongs to the dicarboxylate/amino acid:cation symporter (DAACS) (TC 2.A.23) family.

The protein resides in the cell inner membrane. Responsible for the transport of dicarboxylates such as succinate, fumarate, and malate from the periplasm across the membrane. In Yersinia pseudotuberculosis serotype O:1b (strain IP 31758), this protein is C4-dicarboxylate transport protein.